A 292-amino-acid chain; its full sequence is Potassium channel, subfamily K, member 16 (292 aa).

Residues 1–13 (MPRAGVCGCWGGQ) are Cytoplasmic-facing. The chain crosses the membrane as a helical span at residues 14–34 (VLPLLLAYICYLLLGATIFQL). Positions 98–116 (SFFFAGTVVTTIGYGNLAP) form an intramembrane region, pore-forming. Residues Thr-108, Ile-109, Gly-110, and Tyr-111 each contribute to the K(+) site. A selectivity filter 1 region spans residues 108–113 (TIGYGN). A helical transmembrane segment spans residues 120 to 140 (AGQVFCVFYALMGIPLNVVFL). Residues 141-165 (NHLGTGLRAHLTTLDRWEDHPRHSQ) are Cytoplasmic-facing. The helical transmembrane segment at 166–186 (LLQVLGLALFLTLGTLVILIF) threads the bilayer. The segment at residues 202–221 (GFYFAFITLSTIGFGDYVVG) is an intramembrane region (pore-forming). Thr-212, Ile-213, Gly-214, and Phe-215 together coordinate K(+). A selectivity filter 2 region spans residues 212-217 (TIGFGD). Residues 238–258 (IWILLGLAWLAVVLSLGSLLL) form a helical membrane-spanning segment. The Cytoplasmic portion of the chain corresponds to 259 to 292 (HRCSRLWQLIRGLDLKDGAAPDSEPRSQKIPISA).

It belongs to the two pore domain potassium channel (TC 1.A.1.8) family. In terms of assembly, homodimer; disulfide-linked. Heterodimer with KCNK17 and KCNK5. Expressed in pacreatic beta-cells (at protein level). Expressed in pacreatic delta-cells (at protein level).

The protein localises to the cell membrane. Its subcellular location is the endoplasmic reticulum membrane. It localises to the mitochondrion inner membrane. It catalyses the reaction K(+)(in) = K(+)(out). The enzyme catalyses Rb(+)(in) = Rb(+)(out). The catalysed reaction is Cs(+)(in) = Cs(+)(out). K(+) channel that conducts voltage-dependent outward rectifying currents upon membrane depolarization. Voltage sensing is coupled to K(+) electrochemical gradient in an 'ion flux gating' mode where outward but not inward ion flow opens the gate. Homo- and heterodimerizes to form functional channels with distinct regulatory and gating properties. In pancreatic islets, conducts K(+) countercurrents for Ca(2+) release from the endoplasmic reticulum (ER) and regulates the frequency and duration of cytosolic Ca(2+) oscillations coupled to secretion of pancreatic hormones. In pancreatic beta cells, drives ER Ca(2+) efflux, which in turn activates Ca(2+)-dependent plasma membrane K(+) slow currents and cytosolic Ca(2+) influx, overall contributing to synchronous cytosolic Ca(2+) oscillations. Limits glucose-induced cytosolic Ca(2+) oscillations coupled to second-phase INS secretion. Contributes to beta cell adaptation to acute inflammation by maintaining normal cytosolic Ca(2+) levels and INS secretion. May regulate beta cell mitochondrial Ca(2+) levels either indirectly via ER Ca(2+) efflux or directly by hyperpolarizing the mitochondrial membrane potential. Limits mitochondrial Ca(2+) oscillations and ATP production involved in glucose homeostasis upon metabolic stress. In pancreatic delta cells, limits Ca(2+)-induced Ca(2+)-release involved in somatostatin secretion and modulates islet paracrine signaling involved in glucagon secretion. Permeable to other monovalent cations such as Rb(+) and Cs(+). The sequence is that of Potassium channel, subfamily K, member 16 from Mus musculus (Mouse).